The sequence spans 139 residues: TDP-4-oxo-6-deoxy-alpha-D-glucose-3,4-oxoisomerase (139 aa).

The active-site Proton acceptor is the H49.

Homodimer.

It catalyses the reaction dTDP-4-dehydro-6-deoxy-alpha-D-glucose = dTDP-3-dehydro-6-deoxy-alpha-D-galactose. Mediates the isomerization of dTDP-6-deoxy-D-xylohex-4-ulose into dTDP-6-deoxy-D-xylohex-3-ulose in the biosynthesis of dTDP-3-acetamido-3,6-dideoxy-alpha-D-galactose, a glycan chain of the S-layer. The protein is TDP-4-oxo-6-deoxy-alpha-D-glucose-3,4-oxoisomerase (fdtA) of Aneurinibacillus thermoaerophilus.